A 632-amino-acid chain; its full sequence is DNA mismatch repair protein MutL (632 aa).

The protein belongs to the DNA mismatch repair MutL/HexB family.

In terms of biological role, this protein is involved in the repair of mismatches in DNA. It is required for dam-dependent methyl-directed DNA mismatch repair. May act as a 'molecular matchmaker', a protein that promotes the formation of a stable complex between two or more DNA-binding proteins in an ATP-dependent manner without itself being part of a final effector complex. The sequence is that of DNA mismatch repair protein MutL from Pseudomonas putida (strain GB-1).